A 560-amino-acid chain; its full sequence is Solute carrier family 49 member A3 (560 aa).

The next 12 helical transmembrane spans lie at 30-50 (WVFL…WLSF), 70-90 (WLSL…IWIL), 100-120 (ILGA…CMVV), 125-145 (PFAF…LVIF), 166-186 (LATM…PVLV), 192-212 (IPLM…LSTI), 250-270 (VILA…SALL), 282-302 (GFSG…ALAL), 318-338 (IGLC…QLQG), 341-361 (LALA…GPVA), 379-399 (GMIF…MTAL), and 422-442 (VSLL…AVFF). The segment at 451–540 (AESGEPPSTR…PGRLAGRVQA (90 aa)) is disordered. Over residues 466–481 (ADSGPGVDRGGAGRAG) the composition is skewed to gly residues.

This sequence belongs to the major facilitator superfamily.

The protein localises to the membrane. The protein is Solute carrier family 49 member A3 of Homo sapiens (Human).